Here is a 514-residue protein sequence, read N- to C-terminus: Membrane-bound lytic murein transglycosylase F (514 aa).

The first 30 residues, 1–30 (MKKLKINYLFIGILTLLLAAALWPSIPWFG), serve as a signal peptide directing secretion. The interval 31-269 (KTENHVAAIQ…RIEEKYLGHG (239 aa)) is non-LT domain. Residues 270 to 514 (DDFDYVDTRS…LFTPQKKEEK (245 aa)) form an LT domain region. Glutamate 314 is a catalytic residue.

This sequence in the N-terminal section; belongs to the bacterial solute-binding protein 3 family. It in the C-terminal section; belongs to the transglycosylase Slt family.

It localises to the cell outer membrane. It carries out the reaction Exolytic cleavage of the (1-&gt;4)-beta-glycosidic linkage between N-acetylmuramic acid (MurNAc) and N-acetylglucosamine (GlcNAc) residues in peptidoglycan, from either the reducing or the non-reducing ends of the peptidoglycan chains, with concomitant formation of a 1,6-anhydrobond in the MurNAc residue.. Murein-degrading enzyme that degrades murein glycan strands and insoluble, high-molecular weight murein sacculi, with the concomitant formation of a 1,6-anhydromuramoyl product. Lytic transglycosylases (LTs) play an integral role in the metabolism of the peptidoglycan (PG) sacculus. Their lytic action creates space within the PG sacculus to allow for its expansion as well as for the insertion of various structures such as secretion systems and flagella. The polypeptide is Membrane-bound lytic murein transglycosylase F (Salmonella arizonae (strain ATCC BAA-731 / CDC346-86 / RSK2980)).